The following is a 37-amino-acid chain: Large ribosomal subunit protein bL36 (37 aa).

The protein belongs to the bacterial ribosomal protein bL36 family.

This chain is Large ribosomal subunit protein bL36, found in Marinobacter nauticus (strain ATCC 700491 / DSM 11845 / VT8) (Marinobacter aquaeolei).